We begin with the raw amino-acid sequence, 588 residues long: Probable urocanate hydratase (588 aa).

Residues Met1 to Ala15 show a composition bias toward low complexity. The interval Met1 to Gly22 is disordered. NAD(+)-binding positions include Gly62–Gly63, Gln140, Gly188–Gly190, Glu208, Arg213, Asn254–Ala255, Gln275–His279, and Tyr334. The active site involves Cys431. Gly520 is an NAD(+) binding site.

It belongs to the urocanase family. The cofactor is NAD(+).

The protein localises to the cytoplasm. The enzyme catalyses 4-imidazolone-5-propanoate = trans-urocanate + H2O. The protein operates within amino-acid degradation; L-histidine degradation into L-glutamate; N-formimidoyl-L-glutamate from L-histidine: step 2/3. In terms of biological role, catalyzes the conversion of urocanate to 4-imidazolone-5-propionate. This is Probable urocanate hydratase from Halobacterium salinarum (strain ATCC 29341 / DSM 671 / R1).